The sequence spans 23 residues: Paralytic peptide 2 (23 aa).

A disulfide bond links C7 and C19.

It belongs to the GBP/PSP1/paralytic peptide family. In terms of tissue distribution, hemolymph.

Causes rapid, rigid paralysis when injected into Lepidopteran larvae. The physiological role may be to reduce hemolymph loss following injury and promote wound healing. The protein is Paralytic peptide 2 of Manduca sexta (Tobacco hawkmoth).